A 619-amino-acid chain; its full sequence is Lysophospholipid acyltransferase (619 aa).

Topologically, residues 1-19 are lumenal; it reads MYNPVDAVLTKIITNYGID. A helical transmembrane segment spans residues 20-39; sequence SFTLRYAICLLGSFPLNAIL. The Cytoplasmic segment spans residues 40–51; sequence KRIPEKRIGLKC. The chain crosses the membrane as a helical span at residues 52-72; that stretch reads CFIISMSMFYLFGVLNLVSGF. At 73–92 the chain is on the lumenal side; sequence RTLFISTMFTYLISRFYRSK. A helical transmembrane segment spans residues 93–113; sequence FMPHLNFMFVMGHLAINHIHA. Residues 114-231 lie on the Cytoplasmic side of the membrane; that stretch reads QFLNEQTQTT…GERRQIPKNG (118 aa). Aspartate 146 functions as the Nucleophile in the catalytic mechanism. A helical membrane pass occupies residues 232–252; sequence KLALWKVVQGLAWMILSTLGM. The Lumenal portion of the chain corresponds to 253–274; that stretch reads KHFPVKYVLDKDGFPTRSFIFR. A helical membrane pass occupies residues 275-295; that stretch reads IHYLFLLGFIHRFKYYAAWTI. Over 296–429 the chain is Cytoplasmic; sequence SEGSCILCGL…TPLPSKKIYD (134 aa). Glutamate 297 acts as the Nucleophile in catalysis. Residue histidine 382 is part of the active site. Residues 430-450 traverse the membrane as a helical segment; it reads LVGIYAIKLAFGYMVQPFIIL. Residues 451-456 are Lumenal-facing; sequence DLKPSL. Residues 457–477 traverse the membrane as a helical segment; sequence MVWGSVYFYVHIIVAFSFFLF. The Cytoplasmic portion of the chain corresponds to 478 to 619; it reads RGPYAKQVTE…SPKPISKKEE (142 aa). Serine 513 is modified (phosphoserine). Positions 545 to 593 form a coiled coil; that stretch reads ELEKWDNAKEDWEDFCKDYKEWRNKNGLEIEEENLSKAFERFKQEFSNA. The segment at 592-619 is disordered; it reads NAASGSGERVRKMSFSGYSPKPISKKEE. Residues serine 605, serine 610, and serine 615 each carry the phosphoserine modification.

It belongs to the membrane-bound acyltransferase family.

Its subcellular location is the endoplasmic reticulum membrane. It carries out the reaction a 1-acyl-sn-glycero-3-phosphate + an acyl-CoA = a 1,2-diacyl-sn-glycero-3-phosphate + CoA. The catalysed reaction is a 1-acyl-sn-glycero-3-phosphocholine + an acyl-CoA = a 1,2-diacyl-sn-glycero-3-phosphocholine + CoA. It catalyses the reaction 1-acyl-sn-glycero-3-phospho-(1'-sn-glycerol) + an acyl-CoA = a 1,2-diacyl-sn-glycero-3-phospho-(1'-sn-glycerol) + CoA. The enzyme catalyses a 1-acyl-sn-glycero-3-phospho-(1D-myo-inositol) + an acyl-CoA = a 1,2-diacyl-sn-glycero-3-phospho-(1D-myo-inositol) + CoA. It carries out the reaction a 1-acyl-sn-glycero-3-phospho-L-serine + an acyl-CoA = a 1,2-diacyl-sn-glycero-3-phospho-L-serine + CoA. The catalysed reaction is a 1-acyl-sn-glycero-3-phosphoethanolamine + an acyl-CoA = a 1,2-diacyl-sn-glycero-3-phosphoethanolamine + CoA. It catalyses the reaction 1-(9Z-octadecenoyl)-sn-glycero-3-phosphoethanolamine + (9Z)-octadecenoyl-CoA = 1,2-di-(9Z-octadecenoyl)-sn-glycero-3-phosphoethanolamine + CoA. The enzyme catalyses 1-(9Z-octadecenoyl)-sn-glycero-3-phosphoethanolamine + (9Z)-hexadecenoyl-CoA = 1-(9Z)-octadecenoyl-2-(9Z)-hexadecenoyl-sn-glycero-3-phosphoethanolamine + CoA. It carries out the reaction 1-(9Z-octadecenoyl)-sn-glycero-3-phosphoethanolamine + hexadecanoyl-CoA = 1-(9Z-octadecenoyl)-2-hexadecanoyl-sn-glycero-3-phosphoethanolamine + CoA. The catalysed reaction is 1-(9Z-octadecenoyl)-sn-glycero-3-phosphoethanolamine + tetradecanoyl-CoA = 1-(9Z)-octadecenoyl-2-tetradecanoyl-sn-glycero-3-phosphoethanolamine + CoA. It catalyses the reaction 1-(9Z-octadecenoyl)-sn-glycero-3-phosphate + (9Z)-octadecenoyl-CoA = 1,2-di-(9Z-octadecenoyl)-sn-glycero-3-phosphate + CoA. The enzyme catalyses (9Z)-hexadecenoyl-CoA + 1-hexadecanoyl-sn-glycero-3-phosphocholine = 1-hexadecanoyl-2-(9Z-hexadecenoyl)-sn-glycero-3-phosphocholine + CoA. It carries out the reaction 1-hexadecanoyl-sn-glycero-3-phosphocholine + (9Z)-octadecenoyl-CoA = 1-hexadecanoyl-2-(9Z-octadecenoyl)-sn-glycero-3-phosphocholine + CoA. The catalysed reaction is 1-tetradecanoyl-sn-glycero-3-phosphoethanolamine + (9Z)-octadecenoyl-CoA = 1-tetradecanoyl-2-(9Z-octadecenoyl)-sn-glycero-3-phosphoethanolamine + CoA. It catalyses the reaction 1-(9Z-octadecenoyl)-sn-glycero-3-phospho-L-serine + (9Z)-octadecenoyl-CoA = 1,2-di-(9Z)-octadecenoyl-sn-glycero-3-phospho-L-serine + CoA. The enzyme catalyses a 1-acyl-sn-glycero-3-phospho-(1D-myo-inositol) + (9Z)-octadecenoyl-CoA = a 1-acyl-2-(9Z-octadecenoyl)-sn-glycero-3-phospho-(1D-myo-inositol) + CoA. The protein operates within lipid metabolism; phospholipid metabolism. Its function is as follows. Broad specificity membrane-bound O-acyltransferase that mediates the incorporation of unsaturated acyl chains into the sn-2 position of various lysophospholipids. Preferentially acylates lysophosphocholine (LPC), but also lysophosphoethanolamine (LPE), lysophosphatidylglycerol (LPG), lysophosphatidic acid (LPA), lysophosphoethanolamine (LPE), lysophosphoinositol (LPI), and lysophosphoserine (LPS). Prefers an acyl residue to an alkyl residue at the sn-1 position of lysophospholipid acceptors. Accepts acyl chains in acyl-CoA from C-2 to C-20, and shows strong preference for unsaturated acyl-CoAs with 16-20 carbons. Together with SLC1, plays a central role in phosphatidic acid (PA) biosynthesis. PA is the intermediate, from which all glycerophospholipids are synthesized. Can also introduce an acyl chain at the sn-1 position of the lysophosphatidylcholine analog 1-hydroxy-2-hexadecyl-sn-glycero-3-phosphocholine (HHPC). In Saccharomyces cerevisiae (strain ATCC 204508 / S288c) (Baker's yeast), this protein is Lysophospholipid acyltransferase.